The chain runs to 175 residues: MKLTLEPAPRCLHEYVSQLLEDWQPECLSCEYSHGGSSRPSLHDLFDLELENSRSPSPLLCDWCAEADSESTISTETDVGFTLNTPPVSPLPSYSTSPASIPEDMLLCLEEMPTFDDGDEVRSATTSFESRREKNFDPHVGSFFGCLRCAYYQEQGENSICGLCYLKALAEGKIF.

The interaction with RB1 in competition with E2F1 stretch occupies residues P40–L48. Positions L106 to E110 match the LXCXE motif, interaction with host RB1 motif. Residues C146–C164 fold into a zinc finger.

It belongs to the adenoviridae E1A protein family. Interacts with host UBE2I; this interaction interferes with polySUMOylation. Interacts with host RB1; this interaction induces the aberrant dissociation of RB1-E2F1 complex thereby disrupting the activity of RB1 and activating E2F1-regulated genes. Interacts with host ATF7; the interaction enhances ATF7-mediated viral transactivation activity which requires the zinc binding domains of both proteins. Isoform early E1A 32 kDa protein and isoform early E1A 26 kDa protein interact (via N-terminus) with CUL1 and E3 ubiquitin ligase RBX1; these interactions inhibit RBX1-CUL1-dependent elongation reaction of ubiquitin chains and attenuate ubiquitination of SCF(FBXW7) target proteins. Interacts (via PXLXP motif) with host ZMYND11/BS69 (via MYND-type zinc finger); this interaction inhibits E1A mediated transactivation. Interacts with host EP300; this interaction stimulates the acetylation of RB1 by recruiting EP300 and RB1 into a multimeric-protein complex. Interacts with host CTBP1 and CTBP2; this interaction seems to potentiate viral replication. Interacts with host DCAF7. Interacts with host DYRK1A. Interacts with host KPNA4; this interaction allows E1A import into the host nucleus. Interacts with host EP400; this interaction stabilizes MYC. Interacts with host TBP protein; this interaction probably disrupts the TBP-TATA complex.

The protein resides in the host nucleus. Plays a role in viral genome replication by driving entry of quiescent cells into the cell cycle. Stimulation of progression from G1 to S phase allows the virus to efficiently use the cellular DNA replicating machinery to achieve viral genome replication. E1A protein has both transforming and trans-activating activities. Induces the disassembly of the E2F1 transcription factor from RB1 by direct competition for the same binding site on RB1, with subsequent transcriptional activation of E2F1-regulated S-phase genes and of the E2 region of the adenoviral genome. Release of E2F1 leads to the ARF-mediated inhibition of MDM2 and causes TP53/p53 to accumulate because it is not targeted for degradation by MDM2-mediated ubiquitination anymore. This increase in TP53, in turn, would arrest the cell proliferation and direct its death but this effect is counteracted by the viral protein E1B-55K. Inactivation of the ability of RB1 to arrest the cell cycle is critical for cellular transformation, uncontrolled cellular growth and proliferation induced by viral infection. Interaction with RBX1 and CUL1 inhibits ubiquitination of the proteins targeted by SCF(FBXW7) ubiquitin ligase complex, and may be linked to unregulated host cell proliferation. The tumorigenesis-restraining activity of E1A may be related to the disruption of the host CtBP-CtIP complex through the CtBP binding motif. The sequence is that of Early E1A protein from Canis lupus familiaris (Dog).